A 96-amino-acid chain; its full sequence is UPF0235 protein YggU (96 aa).

The protein belongs to the UPF0235 family.

The chain is UPF0235 protein YggU from Salmonella newport (strain SL254).